The following is a 379-amino-acid chain: Cytochrome b (379 aa).

4 consecutive transmembrane segments (helical) span residues 33–53 (FGSL…FLAM), 77–98 (WLIR…FIHV), 113–133 (WNIG…GYVL), and 178–198 (FFAF…VHLL). Residues histidine 83 and histidine 97 each contribute to the heme b site. Heme b is bound by residues histidine 182 and histidine 196. Histidine 201 lines the a ubiquinone pocket. Transmembrane regions (helical) follow at residues 226-246 (IKDL…ALFF), 288-308 (LGGV…PLLN), 320-340 (ITQT…WIGG), and 347-367 (FTTI…ILMP).

It belongs to the cytochrome b family. As to quaternary structure, the cytochrome bc1 complex contains 11 subunits: 3 respiratory subunits (MT-CYB, CYC1 and UQCRFS1), 2 core proteins (UQCRC1 and UQCRC2) and 6 low-molecular weight proteins (UQCRH/QCR6, UQCRB/QCR7, UQCRQ/QCR8, UQCR10/QCR9, UQCR11/QCR10 and a cleavage product of UQCRFS1). This cytochrome bc1 complex then forms a dimer. Requires heme b as cofactor.

It is found in the mitochondrion inner membrane. Component of the ubiquinol-cytochrome c reductase complex (complex III or cytochrome b-c1 complex) that is part of the mitochondrial respiratory chain. The b-c1 complex mediates electron transfer from ubiquinol to cytochrome c. Contributes to the generation of a proton gradient across the mitochondrial membrane that is then used for ATP synthesis. In Akodon aerosus (Highland grass mouse), this protein is Cytochrome b (MT-CYB).